We begin with the raw amino-acid sequence, 91 residues long: MGRSLKKGPFVADSLLRKVEKQNATEDKSVIKTWSRSSTILPMMIGHTIAVHNGKVHIPVFLTEQMVGHKLGEFAPTRTFRGHIKDKKGTR.

The protein belongs to the universal ribosomal protein uS19 family.

The protein localises to the plastid. It is found in the organellar chromatophore. Its function is as follows. Protein S19 forms a complex with S13 that binds strongly to the 16S ribosomal RNA. In Paulinella chromatophora, this protein is Small ribosomal subunit protein uS19c.